Reading from the N-terminus, the 952-residue chain is ALS2 C-terminal-like protein (952 aa).

MORN repeat units lie at residues 358-380 (YDGEWCRAKPHGKGTLKWPDGRN), 381-403 (HVGTFYQGLEHGFGICLVPQASE), 409-431 (YKCHWREGRMCEYGICEYGTDEV), 432-454 (YKGYFQAGLRHGFGILESAPQAP), 459-481 (YTGHWERGQRSGYGIEEDRDRGE), 483-505 (YIGMWQADQRHGPGVVVTQAGVC), 506-528 (YQGTFQGDKMAGPGILLCEDDSL), and 529-552 (YEGTFTRDLTLLGKGKVTFPNGFT). Residues 795 to 941 (LFPDTKLLEF…IQKEDMRPHH (147 aa)) enclose the VPS9 domain.

As to quaternary structure, homodimer. Forms a heteromeric complex with ALS2. Interacts with ALS2 and RAB5A. In terms of tissue distribution, expressed in heart, lung, liver and kidney.

Its subcellular location is the cytoplasm. Acts as a guanine nucleotide exchange factor (GEF) for Rab5 GTPase. Regulates the ALS2-mediated endosome dynamics. In Mus musculus (Mouse), this protein is ALS2 C-terminal-like protein (Als2cl).